The sequence spans 678 residues: Protein mono-ADP-ribosyltransferase PARP15 (678 aa).

Over residues 1–19 (MAAPGPLPAAALSPGAPTP) the composition is skewed to low complexity. A disordered region spans residues 1 to 67 (MAAPGPLPAA…SSRSMSRDNK (67 aa)). The segment covering 49–58 (GARKASRRSS) has biased composition (basic residues). 2 consecutive Macro domains span residues 78-267 (NVVA…TNWS) and 293-464 (CFTA…KKRD). Substrate-binding positions include 312–313 (DI), 324–325 (ST), arginine 331, valine 335, 409–413 (GTGNA), and glutamine 449. Residues 482-678 (LPEHWTDMNH…YPEYLITFTA (197 aa)) form the PARP catalytic domain.

The protein belongs to the ARTD/PARP family.

It is found in the nucleus. The enzyme catalyses L-aspartyl-[protein] + NAD(+) = 4-O-(ADP-D-ribosyl)-L-aspartyl-[protein] + nicotinamide. The catalysed reaction is L-glutamyl-[protein] + NAD(+) = 5-O-(ADP-D-ribosyl)-L-glutamyl-[protein] + nicotinamide. Mono-ADP-ribosyltransferase that mediates mono-ADP-ribosylation of target proteins. Acts as a negative regulator of transcription. This is Protein mono-ADP-ribosyltransferase PARP15 from Homo sapiens (Human).